The sequence spans 190 residues: dCTP deaminase, dUMP-forming (190 aa).

Residues 101–106 (KSSLGR), aspartate 119, 127–129 (TLE), glutamine 148, tyrosine 162, lysine 170, and glutamine 174 each bind dCTP. Glutamate 129 functions as the Proton donor/acceptor in the catalytic mechanism. The disordered stretch occupies residues 160–190 (HPYGSSRAGSKYQGQRGPTPSRSCQNFIRST). A compositionally biased stretch (polar residues) spans 171 to 190 (YQGQRGPTPSRSCQNFIRST).

Belongs to the dCTP deaminase family. In terms of assembly, homotrimer.

It catalyses the reaction dCTP + 2 H2O = dUMP + NH4(+) + diphosphate. It participates in pyrimidine metabolism; dUMP biosynthesis; dUMP from dCTP: step 1/1. Bifunctional enzyme that catalyzes both the deamination of dCTP to dUTP and the hydrolysis of dUTP to dUMP without releasing the toxic dUTP intermediate. This is dCTP deaminase, dUMP-forming from Mycobacterium bovis (strain ATCC BAA-935 / AF2122/97).